Consider the following 673-residue polypeptide: Potassium-transporting ATPase ATP-binding subunit (673 aa).

Helical transmembrane passes span 34-54 (IMFV…YPDL), 65-85 (VFSI…SEAL), 216-236 (IALF…ILTM), and 253-273 (IALA…AIGI). Asp304 (4-aspartylphosphate intermediate) is an active-site residue. ATP is bound by residues Asp341, Glu345, 370–377 (FTAETRMS), and Lys388. The Mg(2+) site is built by Asp511 and Asp515. 3 consecutive transmembrane segments (helical) span residues 581–601 (FAIL…LNIM), 609–629 (AVLS…PIAM), and 649–669 (VYGL…DLII).

This sequence belongs to the cation transport ATPase (P-type) (TC 3.A.3) family. Type IA subfamily. The system is composed of three essential subunits: KdpA, KdpB and KdpC.

It is found in the cell membrane. It catalyses the reaction K(+)(out) + ATP + H2O = K(+)(in) + ADP + phosphate + H(+). In terms of biological role, part of the high-affinity ATP-driven potassium transport (or Kdp) system, which catalyzes the hydrolysis of ATP coupled with the electrogenic transport of potassium into the cytoplasm. This subunit is responsible for energy coupling to the transport system and for the release of the potassium ions to the cytoplasm. In Staphylococcus epidermidis (strain ATCC 35984 / DSM 28319 / BCRC 17069 / CCUG 31568 / BM 3577 / RP62A), this protein is Potassium-transporting ATPase ATP-binding subunit.